The chain runs to 267 residues: Hydroxyethylthiazole kinase 2 (267 aa).

Methionine 41 serves as a coordination point for substrate. Residues lysine 116 and threonine 166 each contribute to the ATP site. Glycine 193 contributes to the substrate binding site.

Belongs to the Thz kinase family. Mg(2+) is required as a cofactor.

It carries out the reaction 5-(2-hydroxyethyl)-4-methylthiazole + ATP = 4-methyl-5-(2-phosphooxyethyl)-thiazole + ADP + H(+). The protein operates within cofactor biosynthesis; thiamine diphosphate biosynthesis; 4-methyl-5-(2-phosphoethyl)-thiazole from 5-(2-hydroxyethyl)-4-methylthiazole: step 1/1. In terms of biological role, catalyzes the phosphorylation of the hydroxyl group of 4-methyl-5-beta-hydroxyethylthiazole (THZ). The sequence is that of Hydroxyethylthiazole kinase 2 from Streptococcus pneumoniae (strain Taiwan19F-14).